The sequence spans 79 residues: Large ribosomal subunit protein eL38 (79 aa).

Belongs to the eukaryotic ribosomal protein eL38 family.

This is Large ribosomal subunit protein eL38 (RPL38) from Theileria parva (East coast fever infection agent).